We begin with the raw amino-acid sequence, 127 residues long: MATVSRKRKKVKVTPEGVVHIKASFNNVMVTITDVQGNTVSWSSAGKNGFRGSKKNTPYASQVTSEAAAKEAFDLGMRNVQVFIKGPGAGRDAAIRALQGAGLEVRSIRDITPLPHNGCRPPKRRRV.

It belongs to the universal ribosomal protein uS11 family. In terms of assembly, part of the 30S ribosomal subunit. Interacts with proteins S7 and S18. Binds to IF-3.

Its function is as follows. Located on the platform of the 30S subunit, it bridges several disparate RNA helices of the 16S rRNA. Forms part of the Shine-Dalgarno cleft in the 70S ribosome. The chain is Small ribosomal subunit protein uS11 from Chlorobium limicola (strain DSM 245 / NBRC 103803 / 6330).